We begin with the raw amino-acid sequence, 565 residues long: MAQRIFTLILLLCSTSVFAGLFDAPGRSQFVPADQAFTFDFQQNQHDLNLTWQIKDGYYLYRKQIRITPEHAKIADVQLPQGVWHEDEFYGKSEIYRDRLTLPVTINQASAGATLTVTYQGCADAGFCYPPETKTVPLSEVVANNAAPQPVSVPQQEQPTAQLPFSALWALLIGIGIAFTPCVLPMYPLISGIVLGGKQRLSTARALLLTFIYVQGMALTYTALGLVVAAAGLQFQAALQHPYVLIGLAIVFTLLAMSMFGLFTLQLPSSLQTRLTLMSNRQQGGSPGGVFVMGAIAGLICSPCTTAPLSAILLYIAQSGNMWLGGGTLYLYALGMGLPLMLITVFGNRLLPKSGPWMEQVKTAFGFVILALPVFLLERVIGDIWGLRLWSALGVAFFGGAFITSLQAKRGWMRVVQIILLAAALVSVRPLQDWAFGATHTAQTQTHLNFTQIKTVDELNQALVEAKGKPVMLDLYADWCVACKEFEKYTFSDPQVQKALADTVLLQANVTANDAQDVALLKHLNVLGLPTILFFDGQGQEHPQARVTGFMDAETFSAHLRDRQP.

The first 19 residues, 1–19, serve as a signal peptide directing secretion; that stretch reads MAQRIFTLILLLCSTSVFA. 2 cysteine pairs are disulfide-bonded: C122–C128 and C182–C304. 7 helical membrane passes run 163–183, 208–228, 243–263, 296–316, 323–343, 365–385, and 386–406; these read LPFS…TPCV, LLTF…GLVV, YVLI…FGLF, IAGL…LLYI, WLGG…LMLI, FGFV…GDIW, and GLRL…ITSL. Residues 434–565 enclose the Thioredoxin domain; the sequence is WAFGATHTAQ…FSAHLRDRQP (132 aa). C480 and C483 form a disulfide bridge.

This sequence belongs to the thioredoxin family. DsbD subfamily.

Its subcellular location is the cell inner membrane. The catalysed reaction is [protein]-dithiol + NAD(+) = [protein]-disulfide + NADH + H(+). The enzyme catalyses [protein]-dithiol + NADP(+) = [protein]-disulfide + NADPH + H(+). In terms of biological role, required to facilitate the formation of correct disulfide bonds in some periplasmic proteins and for the assembly of the periplasmic c-type cytochromes. Acts by transferring electrons from cytoplasmic thioredoxin to the periplasm. This transfer involves a cascade of disulfide bond formation and reduction steps. The polypeptide is Thiol:disulfide interchange protein DsbD (Shigella dysenteriae serotype 1 (strain Sd197)).